The chain runs to 23 residues: Dermaseptin-4 (23 aa).

Glutamine amide is present on glutamine 23.

Expressed by the skin glands.

It localises to the secreted. Functionally, antimicrobial peptide, active against the Gram-positive bacterium S.aureus, and the Gram-negative bacteria E.coli and P.aeruginosa. Has hemolytic activity (5% hemolysis at 128 ug/ml). This Phyllomedusa tarsius (Brownbelly leaf frog) protein is Dermaseptin-4.